The chain runs to 647 residues: Threonine--tRNA ligase (647 aa).

Positions 1–61 constitute a TGS domain; it reads MIKITFPDGA…EEDGSIEIVT (61 aa). Residues 240–538 are catalytic; the sequence is DHRKLGKELD…LIETYKGAFP (299 aa). C334, H385, and H515 together coordinate Zn(2+).

Belongs to the class-II aminoacyl-tRNA synthetase family. In terms of assembly, homodimer. The cofactor is Zn(2+).

The protein resides in the cytoplasm. It carries out the reaction tRNA(Thr) + L-threonine + ATP = L-threonyl-tRNA(Thr) + AMP + diphosphate + H(+). In terms of biological role, catalyzes the attachment of threonine to tRNA(Thr) in a two-step reaction: L-threonine is first activated by ATP to form Thr-AMP and then transferred to the acceptor end of tRNA(Thr). Also edits incorrectly charged L-seryl-tRNA(Thr). The polypeptide is Threonine--tRNA ligase (Streptococcus pyogenes serotype M6 (strain ATCC BAA-946 / MGAS10394)).